Consider the following 526-residue polypeptide: Phosphoenolpyruvate carboxykinase (ATP) (526 aa).

3 residues coordinate substrate: Arg55, Tyr190, and Lys196. Residues Lys196, His215, and 231-239 (GLSGTGKTT) each bind ATP. The Mn(2+) site is built by Lys196 and His215. Asp252 is a binding site for Mn(2+). ATP-binding residues include Glu280, Arg317, and Thr442. Substrate is bound at residue Arg317.

It belongs to the phosphoenolpyruvate carboxykinase (ATP) family. The cofactor is Mn(2+).

The protein localises to the cytoplasm. It carries out the reaction oxaloacetate + ATP = phosphoenolpyruvate + ADP + CO2. The protein operates within carbohydrate biosynthesis; gluconeogenesis. In terms of biological role, involved in the gluconeogenesis. Catalyzes the conversion of oxaloacetate (OAA) to phosphoenolpyruvate (PEP) through direct phosphoryl transfer between the nucleoside triphosphate and OAA. This is Phosphoenolpyruvate carboxykinase (ATP) from Alkaliphilus oremlandii (strain OhILAs) (Clostridium oremlandii (strain OhILAs)).